A 353-amino-acid chain; its full sequence is MKLGARIFKTGIAITLALYLASWIGLPAPIFAGIAAIFAIQPSIYRSFLIIIDQVQANIIGAVIATVFGLIFGPSPIMIGLTAVIVITIMLKLKIEHTISIALVTVIAILESAGDDFLMFALIRTSTVILGVLSSFIVNLVFLPPKYETKLIHNTVENTEEIMKWIRLSMRQSTEHSILKEDIEKLKEKMIKLDQTYLLYKEERSYFKKTTYVKSRKLVLFRQAIITANRALDTLKKLHRLENEIYHMPEEFQETLTEELDYLLYWHERILMRFVGKIKPHDDAVEEGIRYKQLLTKSFLKNQQNTDEELIDYNMLNIMASAVEYREQLEHLETLITSFQTYHPKDCEIETEE.

4 consecutive transmembrane segments (helical) span residues Leu20–Ile40, Val67–Ile87, Leu103–Ile123, and Thr125–Pro145.

Belongs to the UPF0421 family.

The protein resides in the cell membrane. This chain is UPF0421 protein YgaE (ygaE), found in Bacillus subtilis (strain 168).